The chain runs to 474 residues: Cyclin-dependent kinase 2 homolog (474 aa).

The Protein kinase domain maps to 7–446 (YRHVVKLGEG…AAEAVHHPYL (440 aa)). ATP-binding positions include 13 to 21 (LGEGTYGMV) and lysine 36. Threonine 17 carries the phosphothreonine modification. At tyrosine 18 the chain carries Phosphotyrosine. Aspartate 131 acts as the Proton acceptor in catalysis. The segment at 150-200 (TALPSSPQQSMRVPHAGGTNGEAGRASANGNEHAPRPTAAEGSVSPWEEAA) is disordered. A Phosphoserine modification is found at serine 230. The span at 334-354 (QQLQAQQQQPQQGSSPSHSSS) shows a compositional bias: low complexity. The tract at residues 334–356 (QQLQAQQQQPQQGSSPSHSSSRA) is disordered.

It belongs to the protein kinase superfamily. CMGC Ser/Thr protein kinase family. CDC2/CDKX subfamily. May form a complex composed of at least the catalytic subunit CRK2 and a cyclin. Mg(2+) serves as cofactor.

It is found in the cytoplasm. The catalysed reaction is L-seryl-[protein] + ATP = O-phospho-L-seryl-[protein] + ADP + H(+). It carries out the reaction L-threonyl-[protein] + ATP = O-phospho-L-threonyl-[protein] + ADP + H(+). It catalyses the reaction [DNA-directed RNA polymerase] + ATP = phospho-[DNA-directed RNA polymerase] + ADP + H(+). Phosphorylation at Thr-17 or Tyr-18 inactivates the enzyme, while phosphorylation at Ser-230 activates it. In terms of biological role, serine/threonine-protein kinase. Involved in the control of the cell cycle. Required for entry into S-phase and mitosis. Probable component of the kinase complex that phosphorylates the repetitive C-terminus of RNA polymerase II. The chain is Cyclin-dependent kinase 2 homolog from Crithidia fasciculata.